The sequence spans 77 residues: Cold shock protein YdfK (77 aa).

To E.coli YnaE.

The polypeptide is Cold shock protein YdfK (ydfK) (Escherichia coli (strain K12)).